A 37-amino-acid polypeptide reads, in one-letter code: Large ribosomal subunit protein bL36 (37 aa).

It belongs to the bacterial ribosomal protein bL36 family.

This Caldicellulosiruptor saccharolyticus (strain ATCC 43494 / DSM 8903 / Tp8T 6331) protein is Large ribosomal subunit protein bL36.